Here is a 103-residue protein sequence, read N- to C-terminus: Pyrimidine/purine nucleoside phosphorylase (103 aa).

It belongs to the nucleoside phosphorylase PpnP family.

The enzyme catalyses a purine D-ribonucleoside + phosphate = a purine nucleobase + alpha-D-ribose 1-phosphate. It carries out the reaction adenosine + phosphate = alpha-D-ribose 1-phosphate + adenine. It catalyses the reaction cytidine + phosphate = cytosine + alpha-D-ribose 1-phosphate. The catalysed reaction is guanosine + phosphate = alpha-D-ribose 1-phosphate + guanine. The enzyme catalyses inosine + phosphate = alpha-D-ribose 1-phosphate + hypoxanthine. It carries out the reaction thymidine + phosphate = 2-deoxy-alpha-D-ribose 1-phosphate + thymine. It catalyses the reaction uridine + phosphate = alpha-D-ribose 1-phosphate + uracil. The catalysed reaction is xanthosine + phosphate = alpha-D-ribose 1-phosphate + xanthine. Catalyzes the phosphorolysis of diverse nucleosides, yielding D-ribose 1-phosphate and the respective free bases. Can use uridine, adenosine, guanosine, cytidine, thymidine, inosine and xanthosine as substrates. Also catalyzes the reverse reactions. The protein is Pyrimidine/purine nucleoside phosphorylase of Shewanella baltica (strain OS155 / ATCC BAA-1091).